Consider the following 206-residue polypeptide: Large ribosomal subunit protein uL4 (206 aa).

The segment covering 42-54 has biased composition (polar residues); that stretch reads RRQQGTHQSQGRS. Residues 42–94 form a disordered region; that stretch reads RRQQGTHQSQGRSDVSRTGAKMFKQKGTGRARHSSARAPQFRGGGKAHGPVFR. Positions 64 to 76 are enriched in basic residues; the sequence is FKQKGTGRARHSS.

Belongs to the universal ribosomal protein uL4 family. As to quaternary structure, part of the 50S ribosomal subunit.

One of the primary rRNA binding proteins, this protein initially binds near the 5'-end of the 23S rRNA. It is important during the early stages of 50S assembly. It makes multiple contacts with different domains of the 23S rRNA in the assembled 50S subunit and ribosome. Its function is as follows. Forms part of the polypeptide exit tunnel. The chain is Large ribosomal subunit protein uL4 from Bartonella tribocorum (strain CIP 105476 / IBS 506).